Here is a 913-residue protein sequence, read N- to C-terminus: Protein translocase subunit SecA (913 aa).

Residues Gln87, Gly105–Thr109, and Asp512 each bind ATP. Positions 897, 899, 908, and 909 each coordinate Zn(2+).

Belongs to the SecA family. Monomer and homodimer. Part of the essential Sec protein translocation apparatus which comprises SecA, SecYEG and auxiliary proteins SecDF-YajC and YidC. Zn(2+) serves as cofactor.

It is found in the cell inner membrane. Its subcellular location is the cytoplasm. It catalyses the reaction ATP + H2O + cellular proteinSide 1 = ADP + phosphate + cellular proteinSide 2.. Part of the Sec protein translocase complex. Interacts with the SecYEG preprotein conducting channel. Has a central role in coupling the hydrolysis of ATP to the transfer of proteins into and across the cell membrane, serving both as a receptor for the preprotein-SecB complex and as an ATP-driven molecular motor driving the stepwise translocation of polypeptide chains across the membrane. In Pseudomonas savastanoi pv. phaseolicola (strain 1448A / Race 6) (Pseudomonas syringae pv. phaseolicola (strain 1448A / Race 6)), this protein is Protein translocase subunit SecA.